A 417-amino-acid chain; its full sequence is Tryptophan synthase beta chain (417 aa).

An N6-(pyridoxal phosphate)lysine modification is found at lysine 110.

It belongs to the TrpB family. In terms of assembly, tetramer of two alpha and two beta chains. Requires pyridoxal 5'-phosphate as cofactor.

It carries out the reaction (1S,2R)-1-C-(indol-3-yl)glycerol 3-phosphate + L-serine = D-glyceraldehyde 3-phosphate + L-tryptophan + H2O. It functions in the pathway amino-acid biosynthesis; L-tryptophan biosynthesis; L-tryptophan from chorismate: step 5/5. The beta subunit is responsible for the synthesis of L-tryptophan from indole and L-serine. The chain is Tryptophan synthase beta chain from Prochlorococcus marinus (strain NATL2A).